We begin with the raw amino-acid sequence, 134 residues long: ATP synthase epsilon chain (134 aa).

This sequence belongs to the ATPase epsilon chain family. In terms of assembly, F-type ATPases have 2 components, CF(1) - the catalytic core - and CF(0) - the membrane proton channel. CF(1) has five subunits: alpha(3), beta(3), gamma(1), delta(1), epsilon(1). CF(0) has three main subunits: a, b and c.

The protein resides in the cell inner membrane. Produces ATP from ADP in the presence of a proton gradient across the membrane. The polypeptide is ATP synthase epsilon chain (Syntrophobacter fumaroxidans (strain DSM 10017 / MPOB)).